Reading from the N-terminus, the 1770-residue chain is Transposon Ty2-C Gag-Pol polyprotein (1770 aa).

Polar residues-rich tracts occupy residues 1–11 (MESQQLHQNPR), 19–39 (ASVTSKEVPSNQDPLAVSASN), and 49–60 (KVNSQQETTPGT). 2 disordered regions span residues 1 to 88 (MESQ…YQQH) and 355 to 453 (SQYK…LPDH). Residues 295–397 (ENNINVSDRL…SSKPRAAKAH (103 aa)) form an RNA-binding region. Positions 369–382 (TSPNTTNTKVTTRN) are enriched in low complexity. 2 stretches are compositionally biased toward polar residues: residues 399-408 (IATSSKFSRV) and 415-435 (ESTVSSQYLSDDNELSLGQQQ). The active-site For protease activity; shared with dimeric partner is the Asp-457. The segment at 579–636 (NVNKSKSVNKYPYPLIHRMLGHANFRSIQKSLKKNAVTYLKESDIEWSNASTYQCPDC) is integrase-type zinc finger-like. One can recognise an Integrase catalytic domain in the interval 656–831 (ESYEPFQYLH…AGLDITTILP (176 aa)). 2 residues coordinate Mg(2+): Asp-667 and Asp-732. Disordered regions lie at residues 1003 to 1038 (EMGGTVESDTTSPRHSSTFTARNQKRPGSPNDMIDL) and 1057 to 1205 (GGTE…TEIE). Polar residues-rich tracts occupy residues 1009–1024 (ESDTTSPRHSSTFTAR) and 1065–1082 (QRNSDTNIKYRTTNSTPS). The Bipartite nuclear localization signal signature appears at 1193–1227 (KKRSLEDNETEIEVSRDTWNNKNMRSLEPPRSKKR). The 139-residue stretch at 1353 to 1491 (NDYYITQLDI…DILGLEIKYQ (139 aa)) folds into the Reverse transcriptase Ty1/copia-type domain. Positions 1361, 1442, 1443, 1625, 1667, and 1700 each coordinate Mg(2+). Residues 1625-1767 (DASYGNQPYY…IKTFKLLTNK (143 aa)) form the RNase H Ty1/copia-type domain.

In terms of assembly, the capsid protein forms a homotrimer, from which the VLPs are assembled. The protease is a homodimer, whose active site consists of two apposed aspartic acid residues. Post-translationally, initially, virus-like particles (VLPs) are composed of the structural unprocessed proteins Gag and Gag-Pol, and also contain the host initiator methionine tRNA (tRNA(i)-Met) which serves as a primer for minus-strand DNA synthesis, and a dimer of genomic Ty RNA. Processing of the polyproteins occurs within the particle and proceeds by an ordered pathway, called maturation. First, the protease (PR) is released by autocatalytic cleavage of the Gag-Pol polyprotein, and this cleavage is a prerequisite for subsequent processing at the remaining sites to release the mature structural and catalytic proteins. Maturation takes place prior to the RT reaction and is required to produce transposition-competent VLPs.

It localises to the cytoplasm. The protein resides in the nucleus. It catalyses the reaction DNA(n) + a 2'-deoxyribonucleoside 5'-triphosphate = DNA(n+1) + diphosphate. The catalysed reaction is Endonucleolytic cleavage to 5'-phosphomonoester.. Its function is as follows. Capsid protein (CA) is the structural component of the virus-like particle (VLP), forming the shell that encapsulates the retrotransposons dimeric RNA genome. The particles are assembled from trimer-clustered units and there are holes in the capsid shells that allow for the diffusion of macromolecules. CA also has nucleocapsid-like chaperone activity, promoting primer tRNA(i)-Met annealing to the multipartite primer-binding site (PBS), dimerization of Ty2 RNA and initiation of reverse transcription. The aspartyl protease (PR) mediates the proteolytic cleavages of the Gag and Gag-Pol polyproteins after assembly of the VLP. Functionally, reverse transcriptase/ribonuclease H (RT) is a multifunctional enzyme that catalyzes the conversion of the retro-elements RNA genome into dsDNA within the VLP. The enzyme displays a DNA polymerase activity that can copy either DNA or RNA templates, and a ribonuclease H (RNase H) activity that cleaves the RNA strand of RNA-DNA heteroduplexes during plus-strand synthesis and hydrolyzes RNA primers. The conversion leads to a linear dsDNA copy of the retrotransposon that includes long terminal repeats (LTRs) at both ends. In terms of biological role, integrase (IN) targets the VLP to the nucleus, where a subparticle preintegration complex (PIC) containing at least integrase and the newly synthesized dsDNA copy of the retrotransposon must transit the nuclear membrane. Once in the nucleus, integrase performs the integration of the dsDNA into the host genome. This is Transposon Ty2-C Gag-Pol polyprotein (TY2B-C) from Saccharomyces cerevisiae (strain ATCC 204508 / S288c) (Baker's yeast).